Consider the following 259-residue polypeptide: Transcription factor bHLH80 (259 aa).

Residues 1–25 are disordered; the sequence is MQSTHISGGSSGGGGGGGGEVSRSG. A compositionally biased stretch (gly residues) spans 9–20; sequence GSSGGGGGGGGE. In terms of domain architecture, bHLH spans 187-237; that stretch reads CATHPRSIAERVRRTRISDRIRRLQELVPNMDKQTNTADMLEEAVEYVKAL.

In terms of assembly, homodimer. In terms of tissue distribution, expressed constitutively in roots, leaves, stems, and flowers.

The protein localises to the nucleus. The sequence is that of Transcription factor bHLH80 (BHLH80) from Arabidopsis thaliana (Mouse-ear cress).